The sequence spans 355 residues: Probable cinnamyl alcohol dehydrogenase (355 aa).

C47 contributes to the Zn(2+) binding site. NADP(+) is bound at residue S49. Zn(2+) is bound by residues H69, E70, C100, C103, C106, C114, and C162. Residues T166, 187–192 (GLGGVG), 210–215 (SSSDKK), T250, G274, and 297–299 (SFI) contribute to the NADP(+) site.

The protein belongs to the zinc-containing alcohol dehydrogenase family. In terms of assembly, homodimer. Zn(2+) is required as a cofactor.

The catalysed reaction is (E)-cinnamyl alcohol + NADP(+) = (E)-cinnamaldehyde + NADPH + H(+). The enzyme catalyses (E)-coniferol + NADP(+) = (E)-coniferaldehyde + NADPH + H(+). It catalyses the reaction (E)-sinapyl alcohol + NADP(+) = (E)-sinapaldehyde + NADPH + H(+). It carries out the reaction (E)-4-coumaroyl alcohol + NADP(+) = (E)-4-coumaraldehyde + NADPH + H(+). The catalysed reaction is (E)-caffeyl alcohol + NADP(+) = (E)-caffeyl aldehyde + NADPH + H(+). Its pathway is aromatic compound metabolism; phenylpropanoid biosynthesis. In terms of biological role, involved in lignin biosynthesis. Catalyzes the final step specific for the production of lignin monomers. Catalyzes the NADPH-dependent reduction of coniferaldehyde, 5-hydroxyconiferaldehyde, sinapaldehyde, 4-coumaraldehyde and caffeyl aldehyde to their respective alcohols. In Eucalyptus botryoides (Southern mahogany), this protein is Probable cinnamyl alcohol dehydrogenase (CAD1).